The primary structure comprises 54 residues: Light-harvesting protein B-880 beta chain (54 aa).

Residues 1–20 are Cytoplasmic-facing; the sequence is AEDRSSLSGVSDAEAKEFHA. Histidine 19 and histidine 37 together coordinate a bacteriochlorophyll. Residues 21–43 traverse the membrane as a helical segment; that stretch reads LFVSSFMGFMVVAVLAHVLAWAW. The Periplasmic segment spans residues 44-54; sequence RPWIPGPKGWA.

It belongs to the antenna complex beta subunit family. In terms of assembly, the core complex is formed by different alpha and beta chains, binding bacteriochlorophyll molecules, and arranged most probably in tetrameric structures disposed around the reaction center. The non-pigmented gamma chains may constitute additional components.

It localises to the cell inner membrane. Its function is as follows. Antenna complexes are light-harvesting systems, which transfer the excitation energy to the reaction centers. The polypeptide is Light-harvesting protein B-880 beta chain (Rhodoblastus acidophilus (Rhodopseudomonas acidophila)).